The sequence spans 228 residues: MDEKKQQNITIKGTKDGLTLHLDDCCSFTELLQELDEKLSTHYYDGDGRSLIEVHVKVGNRYLTEVQQEEIRTLIRNKKNLVVDSIESDVITKAEAIAWKEETEIVPISKIVRSGQVLHVKGNLLLIGDVNPGGMVIAGGNIFVVGSLRGIAHAGYYGDKDAVIAASVMNPMQLRISDVTTRAPEEKEDGAETAECAYINEDNHIVVDRLQLLTHLRPNLTKLERGIV.

The protein belongs to the MinC family. As to quaternary structure, interacts with MinD and FtsZ.

Cell division inhibitor that blocks the formation of polar Z ring septums. Rapidly oscillates between the poles of the cell to destabilize FtsZ filaments that have formed before they mature into polar Z rings. Prevents FtsZ polymerization. The chain is Probable septum site-determining protein MinC from Bacillus cytotoxicus (strain DSM 22905 / CIP 110041 / 391-98 / NVH 391-98).